Consider the following 349-residue polypeptide: Desmethyl-yatein O-methyltransferase (349 aa).

Gly-193, Asp-216, Asp-236, Met-237, Met-249, and Lys-250 together coordinate S-adenosyl-L-homocysteine. His-254 acts as the Proton acceptor in catalysis. Residues Glu-282 and Glu-314 contribute to the active site.

This sequence belongs to the class I-like SAM-binding methyltransferase superfamily. Cation-independent O-methyltransferase family. COMT subfamily. As to quaternary structure, homodimer. In terms of tissue distribution, mostly expressed in stems, and, to a lower extent, in leaves.

It carries out the reaction (-)-5'-demethylyatein + S-adenosyl-L-methionine = (-)-yatein + S-adenosyl-L-homocysteine + H(+). It functions in the pathway aromatic compound metabolism; phenylpropanoid biosynthesis. O-methyltransferase involved in the biosynthesis of etoposide, a chemotherapeutic compound of the topoisomerase inhibitor family. Catalyzes the methylation of (-)-5'-demethylyatein to produce (-)-yatein. The sequence is that of Desmethyl-yatein O-methyltransferase from Sinopodophyllum hexandrum (Himalayan may apple).